The sequence spans 72 residues: Palustrin-2CG1 (72 aa).

A signal peptide spans 1-22 (MFTMKKPLLLLFFLGTISLSLC). The propeptide at 23-39 (QEERGADEDDGEMTEEV) is removed in mature form. Residues Cys64 and Cys70 are joined by a disulfide bond.

As to expression, expressed by the skin glands.

It localises to the secreted. Functionally, antimicrobial peptide active against a variety of Gram-positive and some Gram-negative bacterial strains. Has antifungal activity against a slime mold isolate. Has hemolytic activity against human erythrocytes. The chain is Palustrin-2CG1 from Amolops chunganensis (Chungan torrent frog).